A 142-amino-acid chain; its full sequence is Small ribosomal subunit protein uS12 (142 aa).

A disordered region spans residues 1–44 (MANGKYAARKLKQDRQQRRWSDSEYARRERGLGAKSDPLEGAPQ). Positions 11 to 32 (LKQDRQQRRWSDSEYARRERGL) are enriched in basic and acidic residues.

Belongs to the universal ribosomal protein uS12 family. Part of the 30S ribosomal subunit.

Its function is as follows. With S4 and S5 plays an important role in translational accuracy. Located at the interface of the 30S and 50S subunits. This Haloquadratum walsbyi (strain DSM 16790 / HBSQ001) protein is Small ribosomal subunit protein uS12.